The primary structure comprises 158 residues: 6,7-dimethyl-8-ribityllumazine synthase (158 aa).

5-amino-6-(D-ribitylamino)uracil-binding positions include Phe-23, 61 to 63 (SFE), and 85 to 87 (AVI). 90 to 91 (DT) serves as a coordination point for (2S)-2-hydroxy-3-oxobutyl phosphate. His-93 (proton donor) is an active-site residue. Phe-118 provides a ligand contact to 5-amino-6-(D-ribitylamino)uracil. Arg-132 contacts (2S)-2-hydroxy-3-oxobutyl phosphate.

Belongs to the DMRL synthase family.

It carries out the reaction (2S)-2-hydroxy-3-oxobutyl phosphate + 5-amino-6-(D-ribitylamino)uracil = 6,7-dimethyl-8-(1-D-ribityl)lumazine + phosphate + 2 H2O + H(+). The protein operates within cofactor biosynthesis; riboflavin biosynthesis; riboflavin from 2-hydroxy-3-oxobutyl phosphate and 5-amino-6-(D-ribitylamino)uracil: step 1/2. In terms of biological role, catalyzes the formation of 6,7-dimethyl-8-ribityllumazine by condensation of 5-amino-6-(D-ribitylamino)uracil with 3,4-dihydroxy-2-butanone 4-phosphate. This is the penultimate step in the biosynthesis of riboflavin. The protein is 6,7-dimethyl-8-ribityllumazine synthase of Prochlorococcus marinus (strain NATL2A).